A 277-amino-acid polypeptide reads, in one-letter code: uncharacterized protein (277 aa).

An N-terminal signal peptide occupies residues 1-25 (MNKKSIWSKTAFGSLFLLLGTAFTA). C26 carries the N-palmitoyl cysteine lipid modification. A lipid anchor (S-diacylglycerol cysteine) is attached at C26.

It belongs to the MG439/MG440 family.

The protein resides in the cell membrane. This is an uncharacterized protein from Mycoplasma pneumoniae (strain ATCC 29342 / M129 / Subtype 1) (Mycoplasmoides pneumoniae).